Reading from the N-terminus, the 380-residue chain is Flap endonuclease 1 (380 aa).

An N-domain region spans residues 1 to 104 (MGIKGLSQLI…GELTKRAEKR (104 aa)). Aspartate 34 lines the Mg(2+) pocket. Residues arginine 47 and arginine 70 each contribute to the DNA site. Aspartate 86, glutamate 158, glutamate 160, aspartate 179, and aspartate 181 together coordinate Mg(2+). An I-domain region spans residues 122–253 (DIDKFNRRLV…KKAVELINKH (132 aa)). Residue glutamate 158 participates in DNA binding. Residues glycine 231 and aspartate 233 each coordinate DNA. Aspartate 233 is a binding site for Mg(2+). Positions 336–344 (TQGRLDSFF) are interaction with PCNA. The disordered stretch occupies residues 342 to 380 (SFFKVLPSTPNPKRKIEDKKTPASKKAKTTGGKPGRKPK). Positions 363–380 (PASKKAKTTGGKPGRKPK) are enriched in basic residues.

Belongs to the XPG/RAD2 endonuclease family. FEN1 subfamily. As to quaternary structure, interacts with PCNA. Three molecules of FEN1 bind to one PCNA trimer with each molecule binding to one PCNA monomer. PCNA stimulates the nuclease activity without altering cleavage specificity. The cofactor is Mg(2+). Phosphorylated. Phosphorylation upon DNA damage induces relocalization to the nuclear plasma.

It localises to the nucleus. The protein resides in the nucleolus. It is found in the nucleoplasm. The protein localises to the mitochondrion. Its function is as follows. Structure-specific nuclease with 5'-flap endonuclease and 5'-3' exonuclease activities involved in DNA replication and repair. During DNA replication, cleaves the 5'-overhanging flap structure that is generated by displacement synthesis when DNA polymerase encounters the 5'-end of a downstream Okazaki fragment. It enters the flap from the 5'-end and then tracks to cleave the flap base, leaving a nick for ligation. Also involved in the long patch base excision repair (LP-BER) pathway, by cleaving within the apurinic/apyrimidinic (AP) site-terminated flap. Acts as a genome stabilization factor that prevents flaps from equilibrating into structures that lead to duplications and deletions. Also possesses 5'-3' exonuclease activity on nicked or gapped double-stranded DNA, and exhibits RNase H activity. Also involved in replication and repair of rDNA and in repairing mitochondrial DNA. The chain is Flap endonuclease 1 from Aedes aegypti (Yellowfever mosquito).